The following is a 207-amino-acid chain: Carbonic anhydrase 2 (207 aa).

Residues Cys-51, Asp-53, His-104, and Cys-107 each coordinate Zn(2+).

Belongs to the beta-class carbonic anhydrase family. Zn(2+) serves as cofactor.

It carries out the reaction hydrogencarbonate + H(+) = CO2 + H2O. In terms of biological role, catalyzes the reversible hydration of carbon dioxide to form bicarbonate. This is Carbonic anhydrase 2 (mtcA2) from Mycobacterium tuberculosis (strain CDC 1551 / Oshkosh).